Consider the following 701-residue polypeptide: Sulfate anion transporter 1 (701 aa).

Residues 1–20 (MDESPEPLQQGRGPVPVRRQ) are disordered. Helical transmembrane passes span 68–90 (YLAG…AIAY) and 94–116 (AGLQ…FLMG). 2 N-linked (GlcNAc...) asparagine glycosylation sites follow: N158 and N163. Transmembrane regions (helical) follow at residues 176–198 (YAIR…MGVL), 255–277 (GAGQ…LLAA), 290–309 (VPLP…SHFG), 342–364 (ALDA…EMFA), 377–399 (LLAV…SAAL), 412–434 (TQLS…APLF), and 472–494 (LVWA…LAGV). The region spanning 527 to 687 (EFEGLVPEPG…LSVHDAVQTA (161 aa)) is the STAS domain.

It belongs to the SLC26A/SulP transporter (TC 2.A.53) family. As to expression, expressed most abundantly in the kidney and liver, with lower levels in the pancreas, testis, brain, small intestine, colon, and lung.

It localises to the cell membrane. Its subcellular location is the basolateral cell membrane. It carries out the reaction thiosulfate(in) + sulfate(out) = thiosulfate(out) + sulfate(in). The catalysed reaction is 2 hydrogencarbonate(out) + sulfate(in) = 2 hydrogencarbonate(in) + sulfate(out). The enzyme catalyses oxalate(in) + sulfate(out) = oxalate(out) + sulfate(in). It catalyses the reaction oxalate(in) + 2 hydrogencarbonate(out) = oxalate(out) + 2 hydrogencarbonate(in). Sodium-independent sulfate anion transporter. Can transport other anions including bicarbonate, thiosulfate and oxalate by mediating sulfate-thiosulfate, sulfate-hydrogencarbonate and sulfate-oxalate anion exchange. Mediates oxalate-hydrogencarbonate anion exchange. The sequence is that of Sulfate anion transporter 1 (SLC26A1) from Homo sapiens (Human).